A 172-amino-acid polypeptide reads, in one-letter code: Putative RNA polymerase II transcriptional coactivator (172 aa).

2 disordered regions span residues 1–43 (MPPK…QDGN) and 123–172 (QTDA…DDDE). Residues 24–43 (GNTGKAQPQELTKGSDQDGN) are compositionally biased toward polar residues. The span at 131–144 (PKVKALESNKESIK) shows a compositional bias: basic and acidic residues. A compositionally biased stretch (acidic residues) spans 158 to 172 (TSDEEEAAEDEDDDE).

It belongs to the transcriptional coactivator PC4 family.

It localises to the nucleus. Functionally, general coactivator that functions cooperatively with TAFs and mediates functional interactions between upstream activators and the general transcriptional machinery. Binds single-stranded DNA. The chain is Putative RNA polymerase II transcriptional coactivator from Neurospora crassa (strain ATCC 24698 / 74-OR23-1A / CBS 708.71 / DSM 1257 / FGSC 987).